Reading from the N-terminus, the 307-residue chain is 2-dehydropantoate 2-reductase (307 aa).

NADP(+) is bound by residues 7–12, N102, and A128; that span reads GSGAMG. N102 contacts substrate. The active-site Proton donor is the K184. Positions 188, 192, and 255 each coordinate substrate. E268 serves as a coordination point for NADP(+).

This sequence belongs to the ketopantoate reductase family.

It localises to the cytoplasm. It carries out the reaction (R)-pantoate + NADP(+) = 2-dehydropantoate + NADPH + H(+). It functions in the pathway cofactor biosynthesis; (R)-pantothenate biosynthesis; (R)-pantoate from 3-methyl-2-oxobutanoate: step 2/2. Catalyzes the NADPH-dependent reduction of ketopantoate into pantoic acid. The protein is 2-dehydropantoate 2-reductase (apbA) of Streptococcus pyogenes serotype M6 (strain ATCC BAA-946 / MGAS10394).